The chain runs to 295 residues: Probable palmitoyltransferase ZDHHC24 (295 aa).

Over 1 to 20 (MTSFMSRVWCKVESTGRQLP) the chain is Cytoplasmic. The chain crosses the membrane as a helical span at residues 21–41 (IVLNAVLVFSITAEVSYLVLV). Residues 42–60 (EAPFEPEQKKTDWSTIWTG) lie on the Extracellular side of the membrane. Residues 61–81 (LHLFAQYFMLGNITWNASLFV) traverse the membrane as a helical segment. Residues 82–151 (KTNPSIRGVF…HNYRYFLTCL (70 aa)) are Cytoplasmic-facing. Residues 102–152 (RYCYNCETHTPPRCSHCYDCNVCVLRRDHHCVFFGQCVGFHNYRYFLTCLL) enclose the DHHC domain. Cys-132 functions as the S-palmitoyl cysteine intermediate in the catalytic mechanism. Residues 152-172 (LFMWAGLLYAVVMNAEVFIFI) form a helical membrane-spanning segment. The Extracellular portion of the chain corresponds to 173–176 (LKEG). Residues 177–197 (VTFHSVMLLLVPWIMLVSGQV) traverse the membrane as a helical segment. The Cytoplasmic segment spans residues 198–203 (TTRAFA). Residues 204–224 (FAFIADTCVVGFLLVAAFLFF) form a helical membrane-spanning segment. The Extracellular segment spans residues 225–295 (HVALMLRGQT…SLEPKKQAVH (71 aa)).

This sequence belongs to the DHHC palmitoyltransferase family.

Its subcellular location is the membrane. The catalysed reaction is L-cysteinyl-[protein] + hexadecanoyl-CoA = S-hexadecanoyl-L-cysteinyl-[protein] + CoA. Functionally, probable palmitoyltransferase that could catalyze the addition of palmitate onto various protein substrates. The polypeptide is Probable palmitoyltransferase ZDHHC24 (Danio rerio (Zebrafish)).